Consider the following 3619-residue polypeptide: BEACH domain-containing protein lvsA (3619 aa).

Disordered regions lie at residues 1–117 (MFRR…NNNN), 648–709 (KIDD…EKEA), 1101–1129 (NNNNNNSSNNSNNSNNSNNNNNNNNNNDQ), 1367–1390 (SPNLTGLQNNNNNNNNSGGSNSKK), 1636–1658 (IPTPSSSSSSSSTSSTSSRRKSI), 1893–1924 (SSISSNISSSSSSSTLVNSSNSNNNNNTPTSG), and 1964–1999 (QQAALKKKNRMSIQSSPFQSKNLGTGGDDSVTNTPN). Over residues 17–30 (PQVPHSPGHPPHQP) the composition is skewed to pro residues. 8 stretches are compositionally biased toward low complexity: residues 31 to 59 (PQQQQQQQQQQQQQQQQQQQQQQQQQQPQ), 68 to 87 (SVSSPIGSTTSSNSTSSFSS), 97 to 117 (EESSSINSNNNNNNNKNNNNN), 656 to 689 (NNNNNNNNNNNNNNNNNNNDNDNNNNNDNNNEEN), 1101 to 1127 (NNNNNNSSNNSNNSNNSNNNNNNNNNN), 1375 to 1387 (NNNNNNNNSGGSN), 1640 to 1652 (SSSSSSSSTSSTS), and 1893 to 1923 (SSISSNISSSSSSSTLVNSSNSNNNNNTPTS). One copy of the WD 1 repeat lies at 94-133 (SATEESSSINSNNNNNNNKNNNNNNNSNIIESNINVWTIM). Over residues 1974-1986 (MSIQSSPFQSKNL) the composition is skewed to polar residues. Positions 2234–2258 (VKILEKLEADRVGLQKTVQSLYKSL) form a coiled coil. Residues 2294–2335 (LDSDFMNAFCYPLYKLVISDQHEHVDNSIKLWRLLLSLKTSS) form a WD 2 repeat. Disordered regions lie at residues 2403–2457 (KKQH…ITKK) and 2596–2785 (NTSS…SEDE). A compositionally biased stretch (basic and acidic residues) spans 2440–2452 (DRKDQSHQEEKSK). Over residues 2596–2662 (NTSSITNNNN…TTTPQQSSSQ (67 aa)) the composition is skewed to low complexity. Composition is skewed to polar residues over residues 2663–2687 (IKVSSPELSSNEITPPTSPVQSSSE) and 2694–2725 (KLQSSTVEGQLSRNPSSSELFNDNSSTISEEN). 2 stretches are compositionally biased toward low complexity: residues 2726-2735 (SSLTSASTTL) and 2742-2764 (TQTTTTTTTSTPTTQSSVATTTT). Residues 2807-2932 (KDPRLNGIMY…TRDEVYHTLV (126 aa)) form the BEACH-type PH domain. The disordered stretch occupies residues 2940–2971 (TIGGDAQGITGGQTGNDDNDDHHGGGGGRGVR). A compositionally biased stretch (gly residues) spans 2944-2953 (DAQGITGGQT). The span at 2959–2971 (DDHHGGGGGRGVR) shows a compositional bias: basic and acidic residues. The region spanning 2972 to 3270 (DRFTSIWRKS…QLFDKPHPKR (299 aa)) is the BEACH domain. WD repeat units follow at residues 3347–3386 (HHDGPLTCLTATEDGRICVSGGSDSLICVYNLKRFSLAKR), 3389–3428 (GHTGSITCVSASRPYSIIVSGSDDRTCIIWDLNRLCYVRS), 3431–3471 (AHEG…NYKT), 3474–3518 (IAND…LPDN), and 3563–3602 (SHSTAITSIFLTNDQQKFYTGDITGRVCMWSDNEASQVKQ). The disordered stretch occupies residues 3516–3539 (PDNNNSNNNNNNNNNNNNNATQIP). Low complexity predominate over residues 3518-3534 (NNNSNNNNNNNNNNNNN).

It is found in the contractile vacuole membrane. Functionally, involved in myosin-independent cytokinesis and early steps of phagocytosis. Also involved in contractile vacuole-mediated osmoregulation. In Dictyostelium discoideum (Social amoeba), this protein is BEACH domain-containing protein lvsA (lvsA).